A 567-amino-acid polypeptide reads, in one-letter code: UPF0313 protein Tpet_0582 (567 aa).

The Radical SAM core domain maps to 288–560 (KAIETVKFSI…NKMKENVLFK (273 aa)). [4Fe-4S] cluster-binding residues include cysteine 303, cysteine 307, and cysteine 310.

This sequence belongs to the UPF0313 family. [4Fe-4S] cluster is required as a cofactor.

The protein is UPF0313 protein Tpet_0582 of Thermotoga petrophila (strain ATCC BAA-488 / DSM 13995 / JCM 10881 / RKU-1).